A 599-amino-acid polypeptide reads, in one-letter code: Elongation factor 4 (599 aa).

Positions 2–184 (KHIRNFSIIA…RLVRDIPAPE (183 aa)) constitute a tr-type G domain. GTP contacts are provided by residues 14–19 (DHGKST) and 131–134 (NKID).

This sequence belongs to the TRAFAC class translation factor GTPase superfamily. Classic translation factor GTPase family. LepA subfamily.

The protein resides in the cell inner membrane. It catalyses the reaction GTP + H2O = GDP + phosphate + H(+). Functionally, required for accurate and efficient protein synthesis under certain stress conditions. May act as a fidelity factor of the translation reaction, by catalyzing a one-codon backward translocation of tRNAs on improperly translocated ribosomes. Back-translocation proceeds from a post-translocation (POST) complex to a pre-translocation (PRE) complex, thus giving elongation factor G a second chance to translocate the tRNAs correctly. Binds to ribosomes in a GTP-dependent manner. The polypeptide is Elongation factor 4 (Yersinia pestis bv. Antiqua (strain Antiqua)).